The primary structure comprises 1137 residues: Guanine nucleotide exchange factor DBS (1137 aa).

The CRAL-TRIO domain maps to 52-224 (TAMATDEIMH…DLGGTLDYCH (173 aa)). One copy of the Spectrin repeat lies at 351–456 (LQLRHFEQGF…IARRRGLLSK (106 aa)). Phosphoserine is present on residues Ser-457 and Ser-480. Positions 503–529 (LETGAENKIQELNAIYKEYESILNQDL) form a coiled coil. The segment at 557–625 (LAARQTRPVQ…QGRGSAGEEE (69 aa)) is disordered. The segment covering 584 to 597 (GIRRGSENSSSEGG) has biased composition (low complexity). A compositionally biased stretch (basic and acidic residues) spans 607–616 (AKSEMSESRQ). The residue at position 620 (Ser-620) is a Phosphoserine. A DH domain is found at 631–811 (LRRHVMSELL…LGILKAVNDS (181 aa)). Residues 829–945 (KLLMQGSFSV…WVNEIRKVLT (117 aa)) form the PH domain. 2 disordered regions span residues 955-1058 (SQHR…LVPG) and 1116-1137 (GPSGSAQCLSSSGKAHVPRAHP). The span at 962–977 (QSQSLPLPAPTSTSPS) shows a compositional bias: low complexity. Ser-1033, Ser-1034, Ser-1041, and Ser-1042 each carry phosphoserine. The SH3 domain maps to 1055-1116 (LVPGKYTVVA…PASSLSVRLG (62 aa)). The span at 1119–1128 (GSAQCLSSSG) shows a compositional bias: polar residues.

This sequence belongs to the MCF2 family. As to quaternary structure, interacts with GTP-bound RAC1. Interacts with CDC42. Interacts with RHOA. Interacts with CCPG1, which results in specific inhibition of its exchange activity toward RHOA, but does not affect its activity on CDC42.

The protein resides in the cytoplasm. It is found in the cell membrane. It localises to the endomembrane system. Guanine nucleotide exchange factor that catalyzes guanine nucleotide exchange on RHOA and CDC42, and thereby contributes to the regulation of RHOA and CDC42 signaling pathways. Seems to lack activity with RAC1. Becomes activated and highly tumorigenic by truncation of the N-terminus. Isoform 5 activates CDC42. Functionally, does not catalyze guanine nucleotide exchange on CDC42. The chain is Guanine nucleotide exchange factor DBS (MCF2L) from Homo sapiens (Human).